Consider the following 185-residue polypeptide: CASP-like protein 2C2 (185 aa).

Over 1 to 22 (MAAAARVSEVKAEGLLRGACTA) the chain is Cytoplasmic. A helical transmembrane segment spans residues 23–43 (LAAAAALLVGLSTQTETVLLV). Topologically, residues 44–53 (RKKATVKDVQ) are extracellular. The helical transmembrane segment at 54–74 (ALWVLAMAAAAAAGYHLLQLL) threads the bilayer. Residues 75 to 104 (KCLYLGRVGGARPCRRSSRALAWTCLLLDK) lie on the Cytoplasmic side of the membrane. Residues 105 to 125 (ACAYTTFATTVAAAQACVVAL) traverse the membrane as a helical segment. Over 126–146 (DGAHALQWTKLCNIYTRFCEQ) the chain is Extracellular. A helical membrane pass occupies residues 147–167 (VAGSLVLGMLAAVGTAVLSAA). The Cytoplasmic portion of the chain corresponds to 168–185 (SARNVFRHYASLETYAAH).

Belongs to the Casparian strip membrane proteins (CASP) family. As to quaternary structure, homodimer and heterodimers.

Its subcellular location is the cell membrane. In Zea mays (Maize), this protein is CASP-like protein 2C2.